The sequence spans 631 residues: Extracellular metalloproteinase mep (631 aa).

A signal peptide spans 1–19 (MHGLRLVCSIGTLPLVILA). A propeptide spanning residues 20–241 (YPAASLHTTS…VHGVVDYVAD (222 aa)) is cleaved from the precursor. Residues Asn-282, Asn-332, and Asn-364 are each glycosylated (N-linked (GlcNAc...) asparagine). His-425 serves as a coordination point for Zn(2+). The active site involves Glu-426. A Zn(2+)-binding site is contributed by His-429. 2 N-linked (GlcNAc...) asparagine glycosylation sites follow: Asn-470 and Asn-505.

Belongs to the peptidase M36 family. Requires Zn(2+) as cofactor.

It localises to the secreted. Its function is as follows. Secreted metalloproteinase that allows assimilation of proteinaceous substrates. This Aspergillus niger (strain ATCC MYA-4892 / CBS 513.88 / FGSC A1513) protein is Extracellular metalloproteinase mep (mep).